A 1342-amino-acid chain; its full sequence is DNA-directed RNA polymerase subunit beta (1342 aa).

This sequence belongs to the RNA polymerase beta chain family. As to quaternary structure, the RNAP catalytic core consists of 2 alpha, 1 beta, 1 beta' and 1 omega subunit. When a sigma factor is associated with the core the holoenzyme is formed, which can initiate transcription.

The enzyme catalyses RNA(n) + a ribonucleoside 5'-triphosphate = RNA(n+1) + diphosphate. In terms of biological role, DNA-dependent RNA polymerase catalyzes the transcription of DNA into RNA using the four ribonucleoside triphosphates as substrates. The polypeptide is DNA-directed RNA polymerase subunit beta (Actinobacillus pleuropneumoniae serotype 3 (strain JL03)).